Reading from the N-terminus, the 294-residue chain is 33 kDa chaperonin (294 aa).

2 cysteine pairs are disulfide-bonded: Cys238/Cys240 and Cys271/Cys274.

Belongs to the HSP33 family. Under oxidizing conditions two disulfide bonds are formed involving the reactive cysteines. Under reducing conditions zinc is bound to the reactive cysteines and the protein is inactive.

The protein resides in the cytoplasm. Its function is as follows. Redox regulated molecular chaperone. Protects both thermally unfolding and oxidatively damaged proteins from irreversible aggregation. Plays an important role in the bacterial defense system toward oxidative stress. The protein is 33 kDa chaperonin of Clostridium novyi (strain NT).